The following is a 60-amino-acid chain: Large ribosomal subunit protein bL32 (60 aa).

Residues 1-22 (MAVPKKKTSKSRRDMRRSHHAL) show a composition bias toward basic residues. Residues 1–27 (MAVPKKKTSKSRRDMRRSHHALKGSAY) form a disordered region.

The protein belongs to the bacterial ribosomal protein bL32 family.

This chain is Large ribosomal subunit protein bL32, found in Rhodospirillum centenum (strain ATCC 51521 / SW).